The chain runs to 317 residues: Probable cell division protein WhiA (317 aa).

The segment at residues 281–314 (TLKELGEMINPPIGKSGVNHRLRKLDQIADRERG) is a DNA-binding region (H-T-H motif).

This sequence belongs to the WhiA family.

Involved in cell division and chromosome segregation. The protein is Probable cell division protein WhiA of Alkaliphilus metalliredigens (strain QYMF).